Reading from the N-terminus, the 416-residue chain is D-amino acid dehydrogenase 2 (416 aa).

5 to 19 (VCIIGAGVVGLATAY) serves as a coordination point for FAD.

It belongs to the DadA oxidoreductase family. It depends on FAD as a cofactor.

It catalyses the reaction a D-alpha-amino acid + A + H2O = a 2-oxocarboxylate + AH2 + NH4(+). In terms of biological role, oxidative deamination of D-amino acids. The polypeptide is D-amino acid dehydrogenase 2 (dadA2) (Pseudomonas aeruginosa (strain ATCC 15692 / DSM 22644 / CIP 104116 / JCM 14847 / LMG 12228 / 1C / PRS 101 / PAO1)).